Reading from the N-terminus, the 355-residue chain is UDP-N-acetylglucosamine--N-acetylmuramyl-(pentapeptide) pyrophosphoryl-undecaprenol N-acetylglucosamine transferase (355 aa).

Residues 11–13 (TAG), Arg164, Ser194, and Gln289 each bind UDP-N-acetyl-alpha-D-glucosamine.

It belongs to the glycosyltransferase 28 family. MurG subfamily.

Its subcellular location is the cell membrane. It catalyses the reaction di-trans,octa-cis-undecaprenyl diphospho-N-acetyl-alpha-D-muramoyl-L-alanyl-D-glutamyl-meso-2,6-diaminopimeloyl-D-alanyl-D-alanine + UDP-N-acetyl-alpha-D-glucosamine = di-trans,octa-cis-undecaprenyl diphospho-[N-acetyl-alpha-D-glucosaminyl-(1-&gt;4)]-N-acetyl-alpha-D-muramoyl-L-alanyl-D-glutamyl-meso-2,6-diaminopimeloyl-D-alanyl-D-alanine + UDP + H(+). The protein operates within cell wall biogenesis; peptidoglycan biosynthesis. Functionally, cell wall formation. Catalyzes the transfer of a GlcNAc subunit on undecaprenyl-pyrophosphoryl-MurNAc-pentapeptide (lipid intermediate I) to form undecaprenyl-pyrophosphoryl-MurNAc-(pentapeptide)GlcNAc (lipid intermediate II). This Lachnoclostridium phytofermentans (strain ATCC 700394 / DSM 18823 / ISDg) (Clostridium phytofermentans) protein is UDP-N-acetylglucosamine--N-acetylmuramyl-(pentapeptide) pyrophosphoryl-undecaprenol N-acetylglucosamine transferase.